We begin with the raw amino-acid sequence, 200 residues long: Holliday junction branch migration complex subunit RuvA (200 aa).

The segment at 1–63 is domain I; that stretch reads MIASVRGVVT…EDSLTLYGFA (63 aa). A domain II region spans residues 64-142; the sequence is DDDAKALFEL…PVPVGADSAA (79 aa). Residues 143–151 are flexible linker; the sequence is GVTTGAWPE. The tract at residues 151 to 200 is domain III; the sequence is EQVRQALVGLGWTAAQADQAVTAVAETVDGAVPPVPVLLRQAIRLLGRTR.

It belongs to the RuvA family. In terms of assembly, homotetramer. Forms an RuvA(8)-RuvB(12)-Holliday junction (HJ) complex. HJ DNA is sandwiched between 2 RuvA tetramers; dsDNA enters through RuvA and exits via RuvB. An RuvB hexamer assembles on each DNA strand where it exits the tetramer. Each RuvB hexamer is contacted by two RuvA subunits (via domain III) on 2 adjacent RuvB subunits; this complex drives branch migration. In the full resolvosome a probable DNA-RuvA(4)-RuvB(12)-RuvC(2) complex forms which resolves the HJ.

The protein resides in the cytoplasm. The RuvA-RuvB-RuvC complex processes Holliday junction (HJ) DNA during genetic recombination and DNA repair, while the RuvA-RuvB complex plays an important role in the rescue of blocked DNA replication forks via replication fork reversal (RFR). RuvA specifically binds to HJ cruciform DNA, conferring on it an open structure. The RuvB hexamer acts as an ATP-dependent pump, pulling dsDNA into and through the RuvAB complex. HJ branch migration allows RuvC to scan DNA until it finds its consensus sequence, where it cleaves and resolves the cruciform DNA. The sequence is that of Holliday junction branch migration complex subunit RuvA from Salinispora tropica (strain ATCC BAA-916 / DSM 44818 / JCM 13857 / NBRC 105044 / CNB-440).